Here is a 318-residue protein sequence, read N- to C-terminus: DNA primase small subunit PriS (318 aa).

Active-site residues include Asp-95, Asp-97, and Asp-224.

The protein belongs to the eukaryotic-type primase small subunit family. In terms of assembly, heterodimer of a small subunit (PriS) and a large subunit (PriL). Requires Mg(2+) as cofactor. It depends on Mn(2+) as a cofactor.

Functionally, catalytic subunit of DNA primase, an RNA polymerase that catalyzes the synthesis of short RNA molecules used as primers for DNA polymerase during DNA replication. The small subunit contains the primase catalytic core and has DNA synthesis activity on its own. Binding to the large subunit stabilizes and modulates the activity, increasing the rate of DNA synthesis while decreasing the length of the DNA fragments, and conferring RNA synthesis capability. The DNA polymerase activity may enable DNA primase to also catalyze primer extension after primer synthesis. May also play a role in DNA repair. In Sulfurisphaera tokodaii (strain DSM 16993 / JCM 10545 / NBRC 100140 / 7) (Sulfolobus tokodaii), this protein is DNA primase small subunit PriS.